The primary structure comprises 32 residues: MASEIFGIAAVFWVLIPVGLAGGALLLKLQGD.

A helical transmembrane segment spans residues Ala-9 to Leu-27.

The protein belongs to the PetM family. As to quaternary structure, the 4 large subunits of the cytochrome b6-f complex are cytochrome b6, subunit IV (17 kDa polypeptide, PetD), cytochrome f and the Rieske protein, while the 4 small subunits are PetG, PetL, PetM and PetN. The complex functions as a dimer.

Its subcellular location is the cellular thylakoid membrane. In terms of biological role, component of the cytochrome b6-f complex, which mediates electron transfer between photosystem II (PSII) and photosystem I (PSI), cyclic electron flow around PSI, and state transitions. The polypeptide is Cytochrome b6-f complex subunit 7 (Prochlorococcus marinus (strain MIT 9303)).